Consider the following 121-residue polypeptide: Large ribosomal subunit protein eL34B (121 aa).

The protein belongs to the eukaryotic ribosomal protein eL34 family. As to quaternary structure, component of the large ribosomal subunit (LSU). Mature yeast ribosomes consist of a small (40S) and a large (60S) subunit. The 40S small subunit contains 1 molecule of ribosomal RNA (18S rRNA) and 33 different proteins (encoded by 57 genes). The large 60S subunit contains 3 rRNA molecules (25S, 5.8S and 5S rRNA) and 46 different proteins (encoded by 81 genes).

It localises to the cytoplasm. Its function is as follows. Component of the ribosome, a large ribonucleoprotein complex responsible for the synthesis of proteins in the cell. The small ribosomal subunit (SSU) binds messenger RNAs (mRNAs) and translates the encoded message by selecting cognate aminoacyl-transfer RNA (tRNA) molecules. The large subunit (LSU) contains the ribosomal catalytic site termed the peptidyl transferase center (PTC), which catalyzes the formation of peptide bonds, thereby polymerizing the amino acids delivered by tRNAs into a polypeptide chain. The nascent polypeptides leave the ribosome through a tunnel in the LSU and interact with protein factors that function in enzymatic processing, targeting, and the membrane insertion of nascent chains at the exit of the ribosomal tunnel. This chain is Large ribosomal subunit protein eL34B, found in Saccharomyces cerevisiae (strain ATCC 204508 / S288c) (Baker's yeast).